Here is a 303-residue protein sequence, read N- to C-terminus: MAVSLREYRARIKSTESMKKITRAMELIAASRIIKAQQRAQSAAPYARELTRAVSAVATYSNVDHPLTREPENSQRVAMLIVTSDRGLAGAYSSSVLKEAERLAEKLRGEGKTIDVYLCGRKGEAYHRFRNRPVVRSWTGFSDQPSYDAALEVGTTLIDAFLDEEGEHAVDEVHVVYTRFRSMLLQEPTAVRLLPLEVVEGEERPASDEVLPLYEFEPSAEAVLDNLLPQYVQSRIFFAFLQAAASELAARQKAMKSATDNADELIKKYTRIANQARQAGITQEISEIVGGVNALADAQAGSE.

The protein belongs to the ATPase gamma chain family. In terms of assembly, F-type ATPases have 2 components, CF(1) - the catalytic core - and CF(0) - the membrane proton channel. CF(1) has five subunits: alpha(3), beta(3), gamma(1), delta(1), epsilon(1). CF(0) has three main subunits: a, b and c.

Its subcellular location is the cell membrane. Functionally, produces ATP from ADP in the presence of a proton gradient across the membrane. The gamma chain is believed to be important in regulating ATPase activity and the flow of protons through the CF(0) complex. In Nocardioides sp. (strain ATCC BAA-499 / JS614), this protein is ATP synthase gamma chain.